The following is a 369-amino-acid chain: Probable trehalose-phosphate phosphatase I (369 aa).

This sequence belongs to the trehalose phosphatase family. A divalent metal cation is required as a cofactor.

The enzyme catalyses alpha,alpha-trehalose 6-phosphate + H2O = alpha,alpha-trehalose + phosphate. The protein operates within glycan biosynthesis; trehalose biosynthesis. Removes the phosphate from trehalose 6-phosphate to produce free trehalose. Trehalose accumulation in plant may improve abiotic stress tolerance. The protein is Probable trehalose-phosphate phosphatase I (TPPI) of Arabidopsis thaliana (Mouse-ear cress).